Consider the following 195-residue polypeptide: dITP/XTP pyrophosphatase (195 aa).

Substrate is bound at residue 9-14; the sequence is TNNQGK. The Mg(2+) site is built by glutamate 39 and aspartate 68. Aspartate 68 functions as the Proton acceptor in the catalytic mechanism. Substrate-binding positions include serine 69, 146 to 149, lysine 169, and 174 to 175; these read FGYD and HR.

This sequence belongs to the HAM1 NTPase family. Homodimer. Requires Mg(2+) as cofactor.

The enzyme catalyses XTP + H2O = XMP + diphosphate + H(+). It carries out the reaction dITP + H2O = dIMP + diphosphate + H(+). It catalyses the reaction ITP + H2O = IMP + diphosphate + H(+). Functionally, pyrophosphatase that catalyzes the hydrolysis of nucleoside triphosphates to their monophosphate derivatives, with a high preference for the non-canonical purine nucleotides XTP (xanthosine triphosphate), dITP (deoxyinosine triphosphate) and ITP. Seems to function as a house-cleaning enzyme that removes non-canonical purine nucleotides from the nucleotide pool, thus preventing their incorporation into DNA/RNA and avoiding chromosomal lesions. This is dITP/XTP pyrophosphatase from Gloeobacter violaceus (strain ATCC 29082 / PCC 7421).